A 430-amino-acid chain; its full sequence is UDP-N-acetylglucosamine 1-carboxyvinyltransferase (430 aa).

Residue 22 to 23 (KN) coordinates phosphoenolpyruvate. Arg102 contacts UDP-N-acetyl-alpha-D-glucosamine. Residue Cys126 is the Proton donor of the active site. At Cys126 the chain carries 2-(S-cysteinyl)pyruvic acid O-phosphothioketal. UDP-N-acetyl-alpha-D-glucosamine contacts are provided by residues 131-135 (RPVDL), 172-175 (KVSV), Asp317, and Ile339.

The protein belongs to the EPSP synthase family. MurA subfamily.

It localises to the cytoplasm. It catalyses the reaction phosphoenolpyruvate + UDP-N-acetyl-alpha-D-glucosamine = UDP-N-acetyl-3-O-(1-carboxyvinyl)-alpha-D-glucosamine + phosphate. The protein operates within cell wall biogenesis; peptidoglycan biosynthesis. Cell wall formation. Adds enolpyruvyl to UDP-N-acetylglucosamine. The sequence is that of UDP-N-acetylglucosamine 1-carboxyvinyltransferase from Rhizobium leguminosarum bv. trifolii (strain WSM2304).